The primary structure comprises 78 residues: Acyl carrier protein (78 aa).

One can recognise a Carrier domain in the interval 2–77 (SDIAERVKKI…DAVKFIEKAQ (76 aa)). Serine 37 carries the post-translational modification O-(pantetheine 4'-phosphoryl)serine.

Belongs to the acyl carrier protein (ACP) family. In terms of processing, 4'-phosphopantetheine is transferred from CoA to a specific serine of apo-ACP by AcpS. This modification is essential for activity because fatty acids are bound in thioester linkage to the sulfhydryl of the prosthetic group.

The protein localises to the cytoplasm. It participates in lipid metabolism; fatty acid biosynthesis. Its function is as follows. Carrier of the growing fatty acid chain in fatty acid biosynthesis. The sequence is that of Acyl carrier protein from Rhizobium etli (strain CIAT 652).